A 229-amino-acid chain; its full sequence is Aldehyde oxidoreductase iron-sulfur-binding subunit PaoA (229 aa).

Positions 1 to 21 (MSNQGEYPEDNRVGKHEPHDL) are disordered. Residues 1–53 (MSNQGEYPEDNRVGKHEPHDLSLTRRDLIKVSAATAAAAVVYPHSTLAASVPA) constitute a signal peptide (tat-type signal). The span at 9-21 (EDNRVGKHEPHDL) shows a compositional bias: basic and acidic residues. Residues 61–137 (MPLTLKVNGK…GAEITTIEGL (77 aa)) enclose the 2Fe-2S ferredoxin-type domain. Residues Cys99, Cys104, Gly105, Cys107, Cys119, Cys158, Cys161, Cys208, and Cys210 each contribute to the [2Fe-2S] cluster site.

Heterotrimer composed of PaoA, PaoB and PaoC. The cofactor is [2Fe-2S] cluster. Exported by the Tat system. The position of the signal peptide cleavage has not been experimentally proven.

Its subcellular location is the periplasm. The enzyme catalyses an aldehyde + A + H2O = a carboxylate + AH2 + H(+). In terms of biological role, oxidizes aldehydes to the corresponding carboxylic acids with a preference for aromatic aldehydes. It might play a role in the detoxification of aldehydes to avoid cell damage. The sequence is that of Aldehyde oxidoreductase iron-sulfur-binding subunit PaoA from Escherichia coli O157:H7.